We begin with the raw amino-acid sequence, 206 residues long: VEL1-related protein SCY_5430 (206 aa).

The signal sequence occupies residues 1 to 19 (MSFLNIFTFFSVLVSVATA).

The protein belongs to the VEL1 family.

The protein resides in the cytoplasm. It localises to the cytosol. In Saccharomyces cerevisiae (strain YJM789) (Baker's yeast), this protein is VEL1-related protein SCY_5430.